The sequence spans 305 residues: Ribosomal protein L11 methyltransferase (305 aa).

Positions 155, 176, 198, and 241 each coordinate S-adenosyl-L-methionine.

This sequence belongs to the methyltransferase superfamily. PrmA family.

It localises to the cytoplasm. It catalyses the reaction L-lysyl-[protein] + 3 S-adenosyl-L-methionine = N(6),N(6),N(6)-trimethyl-L-lysyl-[protein] + 3 S-adenosyl-L-homocysteine + 3 H(+). Methylates ribosomal protein L11. This is Ribosomal protein L11 methyltransferase from Carboxydothermus hydrogenoformans (strain ATCC BAA-161 / DSM 6008 / Z-2901).